We begin with the raw amino-acid sequence, 143 residues long: Transcription antitermination protein NusB (143 aa).

Belongs to the NusB family.

Functionally, involved in transcription antitermination. Required for transcription of ribosomal RNA (rRNA) genes. Binds specifically to the boxA antiterminator sequence of the ribosomal RNA (rrn) operons. This is Transcription antitermination protein NusB from Desulforamulus reducens (strain ATCC BAA-1160 / DSM 100696 / MI-1) (Desulfotomaculum reducens).